A 277-amino-acid polypeptide reads, in one-letter code: 2-dehydro-3-deoxyphosphooctonate aldolase (277 aa).

It belongs to the KdsA family.

It is found in the cytoplasm. It carries out the reaction D-arabinose 5-phosphate + phosphoenolpyruvate + H2O = 3-deoxy-alpha-D-manno-2-octulosonate-8-phosphate + phosphate. It participates in carbohydrate biosynthesis; 3-deoxy-D-manno-octulosonate biosynthesis; 3-deoxy-D-manno-octulosonate from D-ribulose 5-phosphate: step 2/3. Its pathway is bacterial outer membrane biogenesis; lipopolysaccharide biosynthesis. The chain is 2-dehydro-3-deoxyphosphooctonate aldolase from Vesicomyosocius okutanii subsp. Calyptogena okutanii (strain HA).